The primary structure comprises 273 residues: Nitrogenase iron protein 5 (273 aa).

Position 8-15 (8-15 (GKGGIGKS)) interacts with ATP. Cysteine 94 lines the [4Fe-4S] cluster pocket. Arginine 97 carries the post-translational modification ADP-ribosylarginine; by dinitrogenase reductase ADP-ribosyltransferase. Position 129 (cysteine 129) interacts with [4Fe-4S] cluster.

The protein belongs to the NifH/BchL/ChlL family. As to quaternary structure, homodimer. [4Fe-4S] cluster serves as cofactor. Post-translationally, the reversible ADP-ribosylation of Arg-97 inactivates the nitrogenase reductase and regulates nitrogenase activity.

It carries out the reaction N2 + 8 reduced [2Fe-2S]-[ferredoxin] + 16 ATP + 16 H2O = H2 + 8 oxidized [2Fe-2S]-[ferredoxin] + 2 NH4(+) + 16 ADP + 16 phosphate + 6 H(+). Its function is as follows. The key enzymatic reactions in nitrogen fixation are catalyzed by the nitrogenase complex, which has 2 components: the iron protein and the molybdenum-iron protein. This chain is Nitrogenase iron protein 5 (nifH5), found in Clostridium pasteurianum.